The primary structure comprises 212 residues: Putative inactive 6-phospho-alpha-glucosidase (212 aa).

An NAD(+)-binding site is contributed by 4–70; the sequence is FSVVVAGGGS…PDIAFSYTTD (67 aa). Positions 169 and 200 each coordinate Mn(2+).

This sequence belongs to the glycosyl hydrolase 4 family.

This chain is Putative inactive 6-phospho-alpha-glucosidase, found in Escherichia coli (strain K12).